Reading from the N-terminus, the 266-residue chain is Uridylate kinase (266 aa).

Residue K26 to G29 participates in ATP binding. G67 contacts UMP. Residues G68 and R72 each contribute to the ATP site. UMP-binding positions include D87 and L148–T155. Positions 181 and 184 each coordinate ATP.

This sequence belongs to the UMP kinase family. In terms of assembly, homohexamer.

It is found in the cytoplasm. It carries out the reaction UMP + ATP = UDP + ADP. It functions in the pathway pyrimidine metabolism; CTP biosynthesis via de novo pathway; UDP from UMP (UMPK route): step 1/1. Its activity is regulated as follows. Inhibited by UTP. Catalyzes the reversible phosphorylation of UMP to UDP. This chain is Uridylate kinase, found in Acidothermus cellulolyticus (strain ATCC 43068 / DSM 8971 / 11B).